We begin with the raw amino-acid sequence, 320 residues long: MFARSALGRSDQLVTALNSQKRQFVLTAATTALGSLLFSEDNRLASQMEKGLLHNKNAENSASIPNTANKFFSRPEAEYPGHVPLYTFEKMLMFLGSSVGAYTHPERNEFIVALGESTAITPVLRRLQHQMLSDPVGRQILRERPRMTSTSLDLEHLRELPDNTIGKTYVKWLDKEGVSPDTRVEVKYIDNEELAYIYQRYRECHDFYHAITGLPIIIEGEISVKVFEYMNIGIPMSGLGALFAPLRLKKSQKERLYNIYYPWAFKSGLNSKPLINVYWENILEEDIDEFRKTMGIEQPPDLRNLRKEYFKKLKEAKKIV.

The transit peptide at 1–31 (MFARSALGRSDQLVTALNSQKRQFVLTAATT) directs the protein to the mitochondrion. The Zn(2+) site is built by histidine 205, aspartate 206, histidine 209, and glutamate 221.

This sequence belongs to the COQ4 family. As to quaternary structure, component of a multi-subunit COQ enzyme complex, composed of at least COQ3, COQ4, COQ5, COQ6, COQ7 and COQ9. Requires Zn(2+) as cofactor.

The protein localises to the mitochondrion inner membrane. It carries out the reaction a 4-hydroxy-3-methoxy-5-(all-trans-polyprenyl)benzoate + H(+) = a 2-methoxy-6-(all-trans-polyprenyl)phenol + CO2. The protein operates within cofactor biosynthesis; ubiquinone biosynthesis. Functionally, lyase that catalyzes the C1-decarboxylation of 4-hydroxy-3-methoxy-5-(all-trans-polyprenyl)benzoic acid into 2-methoxy-6-(all-trans-polyprenyl)phenol during ubiquinone biosynthesis. The sequence is that of Ubiquinone biosynthesis protein COQ4, mitochondrial from Scheffersomyces stipitis (strain ATCC 58785 / CBS 6054 / NBRC 10063 / NRRL Y-11545) (Yeast).